A 472-amino-acid polypeptide reads, in one-letter code: Glutamate synthase [NADPH] small chain (472 aa).

The 32-residue stretch at Gln-41 to Leu-72 folds into the 4Fe-4S ferredoxin-type domain. Positions 50, 53, 58, and 62 each coordinate [4Fe-4S] cluster.

It depends on [4Fe-4S] cluster as a cofactor.

It carries out the reaction 2 L-glutamate + NADP(+) = L-glutamine + 2-oxoglutarate + NADPH + H(+). It functions in the pathway amino-acid biosynthesis; L-glutamate biosynthesis via GLT pathway; L-glutamate from 2-oxoglutarate and L-glutamine (NADP(+) route): step 1/1. It participates in energy metabolism; nitrogen metabolism. Its function is as follows. Catalyzes the conversion of L-glutamine and 2-oxoglutarate into two molecules of L-glutamate. The chain is Glutamate synthase [NADPH] small chain from Halomonas elongata (strain ATCC 33173 / DSM 2581 / NBRC 15536 / NCIMB 2198 / 1H9).